A 255-amino-acid chain; its full sequence is Indole-3-glycerol phosphate synthase (255 aa).

The protein belongs to the TrpC family.

The catalysed reaction is 1-(2-carboxyphenylamino)-1-deoxy-D-ribulose 5-phosphate + H(+) = (1S,2R)-1-C-(indol-3-yl)glycerol 3-phosphate + CO2 + H2O. Its pathway is amino-acid biosynthesis; L-tryptophan biosynthesis; L-tryptophan from chorismate: step 4/5. The polypeptide is Indole-3-glycerol phosphate synthase (Streptococcus thermophilus (strain ATCC BAA-250 / LMG 18311)).